The sequence spans 719 residues: Fatty acid oxidation complex subunit alpha (719 aa).

Residues 1–190 (MVYQGNRITV…KLGLVDATVA (190 aa)) are enoyl-CoA hydratase/isomerase. Asp-298 lines the substrate pocket. The tract at residues 313-719 (HDINEAAVLG…AAGETFYATA (407 aa)) is 3-hydroxyacyl-CoA dehydrogenase. NAD(+) is bound by residues Met-326, Asp-345, 402–404 (VVE), Lys-409, and Ser-431. His-452 (for 3-hydroxyacyl-CoA dehydrogenase activity) is an active-site residue. Asn-455 is an NAD(+) binding site. Substrate is bound at residue Asn-502.

The protein in the N-terminal section; belongs to the enoyl-CoA hydratase/isomerase family. It in the C-terminal section; belongs to the 3-hydroxyacyl-CoA dehydrogenase family. As to quaternary structure, heterotetramer of two alpha chains (FadB) and two beta chains (FadA).

The catalysed reaction is a (3S)-3-hydroxyacyl-CoA + NAD(+) = a 3-oxoacyl-CoA + NADH + H(+). It catalyses the reaction a (3S)-3-hydroxyacyl-CoA = a (2E)-enoyl-CoA + H2O. The enzyme catalyses a 4-saturated-(3S)-3-hydroxyacyl-CoA = a (3E)-enoyl-CoA + H2O. It carries out the reaction (3S)-3-hydroxybutanoyl-CoA = (3R)-3-hydroxybutanoyl-CoA. The catalysed reaction is a (3Z)-enoyl-CoA = a 4-saturated (2E)-enoyl-CoA. It catalyses the reaction a (3E)-enoyl-CoA = a 4-saturated (2E)-enoyl-CoA. It functions in the pathway lipid metabolism; fatty acid beta-oxidation. Its function is as follows. Involved in the aerobic and anaerobic degradation of long-chain fatty acids via beta-oxidation cycle. Catalyzes the formation of 3-oxoacyl-CoA from enoyl-CoA via L-3-hydroxyacyl-CoA. It can also use D-3-hydroxyacyl-CoA and cis-3-enoyl-CoA as substrate. The protein is Fatty acid oxidation complex subunit alpha of Psychrobacter cryohalolentis (strain ATCC BAA-1226 / DSM 17306 / VKM B-2378 / K5).